Consider the following 321-residue polypeptide: Protein FAM110C (321 aa).

Disordered regions lie at residues methionine 1–proline 84 and arginine 111–aspartate 203. Basic and acidic residues-rich tracts occupy residues leucine 15–lysine 46 and glycine 131–lysine 145. The segment covering alanine 169–proline 181 has biased composition (low complexity). Serine 241 bears the Phosphoserine mark.

Belongs to the FAM110 family. As to quaternary structure, interacts with AKT1; the interaction is transient and follows AKT1 activation. Interacts with PPP2CA and alpha-tubulin. As to expression, detected in stomach, thyroid, trachea, adrenal gland and testis, and at low levels in prostate, ovary, intestine, colon, spinal cord and lymph node.

It localises to the cytoplasm. The protein resides in the cytoskeleton. The protein localises to the microtubule organizing center. It is found in the centrosome. Its subcellular location is the spindle pole. It localises to the nucleus. Its function is as follows. May play a role in microtubule organization. May play a role in cell spreading and cell migration of epithelial cells; the function may involve the AKT1 signaling pathway. The sequence is that of Protein FAM110C (FAM110C) from Homo sapiens (Human).